Consider the following 290-residue polypeptide: Elongation factor Ts (290 aa).

An involved in Mg(2+) ion dislocation from EF-Tu region spans residues 80 to 83 (TDFV).

The protein belongs to the EF-Ts family.

It localises to the cytoplasm. In terms of biological role, associates with the EF-Tu.GDP complex and induces the exchange of GDP to GTP. It remains bound to the aminoacyl-tRNA.EF-Tu.GTP complex up to the GTP hydrolysis stage on the ribosome. In Neorickettsia sennetsu (strain ATCC VR-367 / Miyayama) (Ehrlichia sennetsu), this protein is Elongation factor Ts.